The following is a 74-amino-acid chain: NADH dehydrogenase [ubiquinone] 1 alpha subcomplex assembly factor 8 (74 aa).

The 48-residue stretch at 22 to 69 folds into the CHCH domain; sequence LAACGAEAAAYGRCVQASTAPGGRLSKDFCAREFEALRSCFAAAAKKT. 2 short sequence motifs (cx9C motif) span residues 25-35 and 51-61; these read CGAEAAAYGRC and CAREFEALRSC. Cystine bridges form between C25–C61 and C35–C51.

As to quaternary structure, interacts with NDUFAF5.

The protein resides in the mitochondrion. Involved in the assembly of mitochondrial NADH:ubiquinone oxidoreductase complex (complex I, MT-ND1). Required to stabilize NDUFAF5. The chain is NADH dehydrogenase [ubiquinone] 1 alpha subcomplex assembly factor 8 from Homo sapiens (Human).